Consider the following 56-residue polypeptide: Large ribosomal subunit protein bL33 (56 aa).

Belongs to the bacterial ribosomal protein bL33 family.

The polypeptide is Large ribosomal subunit protein bL33 (Vibrio campbellii (strain ATCC BAA-1116)).